Here is a 737-residue protein sequence, read N- to C-terminus: Dynein axonemal intermediate chain 7 homolog (737 aa).

Residues 1 to 15 show a composition bias toward polar residues; that stretch reads MPPKSPNRSGKSTPT. 3 disordered regions span residues 1-61, 274-362, and 410-452; these read MPPK…ERRA, KKVK…DDEE, and STVK…QQPP. 3 stretches are compositionally biased toward basic and acidic residues: residues 18–61, 276–316, and 333–349; these read RPGE…ERRA, VKDE…EGRQ, and EETK…DAVK. Polar residues-rich tracts occupy residues 417-429 and 441-451; these read DNPN…SRVA and PSKTPLEQQQP.

The protein belongs to the DNAI7 family.

The chain is Dynein axonemal intermediate chain 7 homolog (AXP83.9) from Ciona intestinalis (Transparent sea squirt).